We begin with the raw amino-acid sequence, 278 residues long: Biotin synthase (278 aa).

The Radical SAM core domain occupies methionine 1 to arginine 227. [4Fe-4S] cluster is bound by residues cysteine 16, cysteine 20, and cysteine 23. Residues cysteine 60, cysteine 95, and cysteine 153 each coordinate [2Fe-2S] cluster.

Belongs to the radical SAM superfamily. Biotin synthase family. Homodimer. Requires [4Fe-4S] cluster as cofactor. [2Fe-2S] cluster is required as a cofactor.

The catalysed reaction is (4R,5S)-dethiobiotin + (sulfur carrier)-SH + 2 reduced [2Fe-2S]-[ferredoxin] + 2 S-adenosyl-L-methionine = (sulfur carrier)-H + biotin + 2 5'-deoxyadenosine + 2 L-methionine + 2 oxidized [2Fe-2S]-[ferredoxin]. It participates in cofactor biosynthesis; biotin biosynthesis; biotin from 7,8-diaminononanoate: step 2/2. Its function is as follows. Catalyzes the conversion of dethiobiotin (DTB) to biotin by the insertion of a sulfur atom into dethiobiotin via a radical-based mechanism. The chain is Biotin synthase from Campylobacter jejuni subsp. doylei (strain ATCC BAA-1458 / RM4099 / 269.97).